The primary structure comprises 917 residues: Nitrate reductase [NADH] 2 (917 aa).

The disordered stretch occupies residues 1-72 (MAASVDNRQY…SEDENETHNS (72 aa)). Residues 37 to 47 (AHQNQTTNQTV) show a composition bias toward polar residues. Acidic residues predominate over residues 57 to 67 (DDEDVSSEDEN). Residue C191 participates in Mo-molybdopterin binding. The Cytochrome b5 heme-binding domain occupies 542-617 (AKMYSMSEVK…LEDYRIGELI (76 aa)). The heme site is built by H577 and H600. The region spanning 660–772 (RAKVPVQLVE…KGPLGHVEYL (113 aa)) is the FAD-binding FR-type domain. FAD-binding positions include 712–715 (RAYT), 729–733 (VVKIY), F734, F741, 746–748 (LMS), and T799.

It belongs to the nitrate reductase family. As to quaternary structure, homodimer. Requires FAD as cofactor. Heme serves as cofactor. Mo-molybdopterin is required as a cofactor. As to expression, root, leaf, and shoot.

It carries out the reaction nitrite + NAD(+) + H2O = nitrate + NADH + H(+). Its function is as follows. Nitrate reductase is a key enzyme involved in the first step of nitrate assimilation in plants, fungi and bacteria. In Arabidopsis thaliana (Mouse-ear cress), this protein is Nitrate reductase [NADH] 2 (NIA2).